Consider the following 518-residue polypeptide: D-aminopeptidase (518 aa).

The Nucleophile role is filled by Ser62. The Proton donor/acceptor role is filled by Lys65. Residues 373–392 form a disordered region; the sequence is FGTGPEKMDISGENEAQSSM. An important for specificity region spans residues 477–487; it reads QRSMDAPSPGE. Asp481 is a binding site for substrate.

This sequence belongs to the peptidase S12 family. Homodimer.

It catalyses the reaction Release of an N-terminal D-amino acid from a peptide, Xaa-|-Yaa-, in which Xaa is preferably D-Ala, D-Ser or D-Thr. D-amino acid amides and methyl esters also are hydrolyzed, as is glycine amide.. With respect to regulation, inhibited by beta-lactam compounds such as 6-aminopenicillic acid, 7-aminocephalosporanic acid, benzylpenicillin and ampicillin. Inhibited by p-chloromercuribenzoate. Its function is as follows. Hydrolyzes N-terminal residues in D-amino acid-containing peptides. The sequence is that of D-aminopeptidase from Brucella melitensis biotype 1 (strain ATCC 23456 / CCUG 17765 / NCTC 10094 / 16M).